The primary structure comprises 802 residues: MRYPSLARLPRRALSGLARAPVRLQSQNFLSQRCASTAALRSASAVAPACQSALHRQFQQRRYASATASAVLEAAASSPDNLTQEAIIDNLDPVEAERLSRVRNIGIAAHIDSGKTTCTERVLFYTGRIKAIHEVRGGDKVGAKMDSMDLEREKGITIQSAATFCDWVKKDKEGKEHKYHINLIDTPGHIDFTIEVERALRVLDGAVMILCAVSGVQSQTMTVDRQMRRYNVPRISFINKMDRMGANPFKAIDQINTKLKIPAAAVQVPIGAEDEFEGVVDLLRMKAIYNVGPSGEELRETDEIPEKVKAVAEERRNMLIETLADVDDEIAELFLSETEPTEQQLRDAIRRATIGLKFTPVFMGSALANKSVQPMLDGVIDYLPNPSEVQNLALDKKRDEASVKLVPYNSLPLVGLAFKLEESNFGQLTYIRVYQGTLRKGANVFNARNDKKVKIPRIVRMHSNEMEEVSEIGAGEICAVFGVDCASGDTFTDGQLGYTMSSMFVPEPVISLSIKPKNNKDAAKFSKAMARFQREDPTFRVTFDAESEQTLISGMGELHLDIYIERMRREYNVDCETGPPQVAYRETIGNHVEFDHLLKKQSGGPGDYARVVGYMEPTEKLEENVFEEQIVGGSISEKFLFACEKGFHLACEKGPLIGHKVLGTKMLINDGATHMTDSSEMSFKNATQQAFRKAFMESNPSVLEPMMKTVVTAPAEFQGDVIALLNKRNATINDSDVGVDEVTVYADCSLNGMFGFSSHLRAATQGKGEYTMEFSHYEKATPQLQKELIAKYQKAQADRHKK.

A mitochondrion-targeting transit peptide spans 1–24; sequence MRYPSLARLPRRALSGLARAPVRL. A tr-type G domain is found at 100–387; the sequence is SRVRNIGIAA…GVIDYLPNPS (288 aa). GTP is bound by residues 109 to 116, 185 to 189, and 239 to 242; these read AHIDSGKT, DTPGH, and NKMD.

The protein belongs to the TRAFAC class translation factor GTPase superfamily. Classic translation factor GTPase family. EF-G/EF-2 subfamily.

The protein resides in the mitochondrion. The protein operates within protein biosynthesis; polypeptide chain elongation. In terms of biological role, mitochondrial GTPase that catalyzes the GTP-dependent ribosomal translocation step during translation elongation. During this step, the ribosome changes from the pre-translocational (PRE) to the post-translocational (POST) state as the newly formed A-site-bound peptidyl-tRNA and P-site-bound deacylated tRNA move to the P and E sites, respectively. Catalyzes the coordinated movement of the two tRNA molecules, the mRNA and conformational changes in the ribosome. This chain is Elongation factor G, mitochondrial (mef1), found in Aspergillus terreus (strain NIH 2624 / FGSC A1156).